A 170-amino-acid chain; its full sequence is Non-classical export protein 102 (170 aa).

Topologically, residues 1-11 (MLAIGDVILRA) are cytoplasmic. The region spanning 6–141 (DVILRAFNFV…TFIFIASAIF (136 aa)) is the MARVEL domain. The helical transmembrane segment at 12 to 32 (FNFVFLVIALGLTGSLAATTI) threads the bilayer. Residues 33-38 (TQHNPQ) are Extracellular-facing. The chain crosses the membrane as a helical span at residues 39 to 61 (INFAVFAAAFGLLTSSFYGVFAY). The Cytoplasmic segment spans residues 62-76 (FVAAFAWPVILFVFD). A helical membrane pass occupies residues 77-97 (FLNFVFTFAAATAIAAGIRAH). At 98-125 (SCSNQDYLDDNNIAQGSSGRCRKAQAST) the chain is on the extracellular side. Residues 126 to 146 (AFLYFSTFIFIASAIFSAISL) form a helical membrane-spanning segment. The Cytoplasmic portion of the chain corresponds to 147 to 170 (SKGGLFGHSSRPAPRTGVPTMSQV).

The protein belongs to the NCE102 family.

It localises to the cell membrane. Its function is as follows. Involved in membrane organization. Involved in a novel pathway of export of proteins that lack a cleavable signal sequence. Non-classical export pathway also functions as an alternative clearance/detoxification pathway to eliminate damaged material, when the basic repair pathway is not sufficient. Regulates actin organization and subsequent morphogenesis and pathogenesis. This Candida albicans (strain SC5314 / ATCC MYA-2876) (Yeast) protein is Non-classical export protein 102.